The following is a 358-amino-acid chain: Histidinol-phosphate aminotransferase (358 aa).

Lys-211 is subject to N6-(pyridoxal phosphate)lysine.

This sequence belongs to the class-II pyridoxal-phosphate-dependent aminotransferase family. Histidinol-phosphate aminotransferase subfamily. In terms of assembly, homodimer. The cofactor is pyridoxal 5'-phosphate.

The enzyme catalyses L-histidinol phosphate + 2-oxoglutarate = 3-(imidazol-4-yl)-2-oxopropyl phosphate + L-glutamate. It functions in the pathway amino-acid biosynthesis; L-histidine biosynthesis; L-histidine from 5-phospho-alpha-D-ribose 1-diphosphate: step 7/9. The sequence is that of Histidinol-phosphate aminotransferase from Blochmanniella pennsylvanica (strain BPEN).